The primary structure comprises 110 residues: U-scoloptoxin(16)-Er6a (110 aa).

Residues 1–26 form the signal peptide; it reads MTSTRKLSVSCLIVFMVSSLIAVSSG.

It belongs to the scoloptoxin-16 family. Post-translationally, contains 4 disulfide bonds. In terms of tissue distribution, expressed by the venom gland.

It localises to the secreted. This Ethmostigmus rubripes (Giant centipede) protein is U-scoloptoxin(16)-Er6a.